Consider the following 659-residue polypeptide: RNA polymerase II subunit A C-terminal domain phosphatase (659 aa).

Positions 139-303 (ITNRKLVLLV…KNSKEQMPVQ (165 aa)) constitute an FCP1 homology domain. Positions 351-443 (ERHKVLDGCV…LKADENLFQL (93 aa)) constitute a BRCT domain. The span at 484–504 (ALSDDEDDGDNEDEDDDGNDV) shows a compositional bias: acidic residues. Residues 484–640 (ALSDDEDDGD…PESDDDDEFE (157 aa)) form a disordered region. The span at 505-519 (GEDKGDENLEEKQEK) shows a compositional bias: basic and acidic residues. The segment covering 529–538 (QNGSVENQSG) has biased composition (polar residues). Composition is skewed to acidic residues over residues 560 to 576 (MEDE…DDDT), 596 to 607 (ENEDDAVFDVDD), and 616 to 640 (IDEE…DEFE).

The protein localises to the nucleus. It catalyses the reaction O-phospho-L-seryl-[protein] + H2O = L-seryl-[protein] + phosphate. The enzyme catalyses O-phospho-L-threonyl-[protein] + H2O = L-threonyl-[protein] + phosphate. During the late stages of oogenesis, dephosphorylates 'Ser-5' of the heptad repeats YSPTSPS in the C-terminal domain of the largest RNA polymerase II subunit ama-1. Similarly, dephosphorylates 'Ser-5' of ama-1 in early embryonic cells prior to the activation of the zygotic transcription program at the 4-cell embryonic stage. May dephosphorylate 'Ser-2' of the ama-1 heptad repeats YSPTSPS in embryonic somatic and germline cells. In Caenorhabditis elegans, this protein is RNA polymerase II subunit A C-terminal domain phosphatase.